Here is a 496-residue protein sequence, read N- to C-terminus: RNA-binding motif protein, Y chromosome, family 1 member B (496 aa).

An RRM domain is found at 8–85 (GKLFIGGLNR…KAIKVEQAKK (78 aa)). 2 disordered regions span residues 67–349 (DMNG…HRDY) and 452–496 (KDQR…SSRY). Composition is skewed to low complexity over residues 97–114 (PASS…SARG) and 149–159 (PVKRGPSSRSG). Polar residues predominate over residues 175–184 (NSWMGSQGPM). 6 stretches are compositionally biased toward basic and acidic residues: residues 204-214 (RNDRMSTRHDG), 242-253 (DNGHSNRDEHSS), 276-289 (AYRD…DESY), 313-326 (GYRD…HESY), 335-349 (SSRE…HRDY), and 484-496 (GESR…SSRY).

Interacts with splicing factor proteins SFRS3/SRP20, TRA2B/SFRS10, KHDRBS1/SAM68 and KHDRBS3. As to expression, testis-specific.

Its subcellular location is the nucleus. In terms of biological role, RNA-binding protein which may be involved in spermatogenesis. Required for sperm development, possibly by participating in pre-mRNA splicing in the testis. The polypeptide is RNA-binding motif protein, Y chromosome, family 1 member B (RBMY1B) (Homo sapiens (Human)).